The primary structure comprises 62 residues: Prokaryotic ubiquitin-like protein Pup (62 aa).

Residues 1–29 form a disordered region; the sequence is MSQQSLNAPGPGAEDGNDPEAVTGGQTFA. An ARC ATPase binding region spans residues 21 to 56; it reads AVTGGQTFASAQAADDLLDEIDSVLESNAETFVRSF. The residue at position 62 (Gln-62) is a Deamidated glutamine. An Isoglutamyl lysine isopeptide (Gln-Lys) (interchain with K-? in acceptor proteins) cross-link involves residue Gln-62.

It belongs to the prokaryotic ubiquitin-like protein family. In terms of assembly, strongly interacts with the proteasome-associated ATPase ARC through a hydrophobic interface; the interacting region of Pup lies in its C-terminal half. There is one Pup binding site per ARC hexamer ring. Post-translationally, is modified by deamidation of its C-terminal glutamine to glutamate by the deamidase Dop, a prerequisite to the subsequent pupylation process.

It functions in the pathway protein degradation; proteasomal Pup-dependent pathway. Protein modifier that is covalently attached to lysine residues of substrate proteins, thereby targeting them for proteasomal degradation. The tagging system is termed pupylation. The chain is Prokaryotic ubiquitin-like protein Pup from Brachybacterium faecium (strain ATCC 43885 / DSM 4810 / JCM 11609 / LMG 19847 / NBRC 14762 / NCIMB 9860 / 6-10).